A 321-amino-acid polypeptide reads, in one-letter code: Citrate synthase (321 aa).

Active-site residues include His-248 and Asp-306.

It belongs to the citrate synthase family.

It catalyses the reaction oxaloacetate + acetyl-CoA + H2O = citrate + CoA + H(+). It functions in the pathway carbohydrate metabolism; tricarboxylic acid cycle; isocitrate from oxaloacetate: step 1/2. This chain is Citrate synthase (gltA), found in Bartonella bacilliformis.